The primary structure comprises 148 residues: DNA-directed RNA polymerase II subunit GRINL1A, isoforms 4/5 (148 aa).

The interval M1–V66 is disordered. The segment covering G53–V66 has biased composition (low complexity).

This chain is DNA-directed RNA polymerase II subunit GRINL1A, isoforms 4/5 (POLR2M), found in Homo sapiens (Human).